The following is a 346-amino-acid chain: Biotin synthase (346 aa).

The region spanning 38–256 (QQVQVSTLLS…IAVARIMMPT (219 aa)) is the Radical SAM core domain. [4Fe-4S] cluster-binding residues include C53, C57, and C60. [2Fe-2S] cluster-binding residues include C97, C128, C188, and R260.

It belongs to the radical SAM superfamily. Biotin synthase family. In terms of assembly, homodimer. The cofactor is [4Fe-4S] cluster. Requires [2Fe-2S] cluster as cofactor.

It carries out the reaction (4R,5S)-dethiobiotin + (sulfur carrier)-SH + 2 reduced [2Fe-2S]-[ferredoxin] + 2 S-adenosyl-L-methionine = (sulfur carrier)-H + biotin + 2 5'-deoxyadenosine + 2 L-methionine + 2 oxidized [2Fe-2S]-[ferredoxin]. It functions in the pathway cofactor biosynthesis; biotin biosynthesis; biotin from 7,8-diaminononanoate: step 2/2. Its function is as follows. Catalyzes the conversion of dethiobiotin (DTB) to biotin by the insertion of a sulfur atom into dethiobiotin via a radical-based mechanism. This chain is Biotin synthase, found in Salmonella newport (strain SL254).